An 830-amino-acid polypeptide reads, in one-letter code: Interleukin-4 receptor subunit alpha (830 aa).

The signal sequence occupies residues 1-32 (MGWLCPGLTFSVSCLILVWAAGSGVTCVSPGG). The Extracellular segment spans residues 33-240 (VRVLEWPICL…NYYEEPLEQR (208 aa)). Cysteine 41 and cysteine 51 are disulfide-bonded. N-linked (GlcNAc...) asparagine glycosylation is found at asparagine 60 and asparagine 78. A disulfide bridge links cysteine 82 with cysteine 94. N-linked (GlcNAc...) asparagine glycans are attached at residues asparagine 120, asparagine 142, and asparagine 170. Residues 133-232 (APRNLMVHAN…WSPSVKWLNY (100 aa)) enclose the Fibronectin type-III domain. Phosphoserine is present on serine 172. 2 N-linked (GlcNAc...) asparagine glycosylation sites follow: asparagine 184 and asparagine 217. A WSXWS motif motif is present at residues 220–224 (WSEWS). The helical transmembrane segment at 241 to 264 (LPLGVSISCVVILIICLSCYFGII) threads the bilayer. At 265–830 (RIKKEWWDQI…SPGPACMDTS (566 aa)) the chain is on the cytoplasmic side. Positions 270–278 (WWDQIPNPA) match the Box 1 motif motif. Residues 378 to 387 (ENEEEEEEED) show a composition bias toward acidic residues. 2 disordered regions span residues 378–403 (ENEE…GSFQ) and 450–488 (MPWA…SLAS). A required for IRS1 activation and IL4-induced cell growth region spans residues 444 to 564 (ENASAPMPWA…ETWEQILRQS (121 aa)). Residue tyrosine 504 is modified to Phosphotyrosine. Disordered regions lie at residues 508 to 610 (STFL…EAGY) and 623 to 696 (CPGT…DGQK). A compositionally biased stretch (acidic residues) spans 518–534 (GELDSDPELAEALEEVE). The span at 538-551 (PAAPQPSEPPPTLQ) shows a compositional bias: pro residues. Residues 564 to 662 (SVLQRRAAPA…VPTPLFTFGL (99 aa)) form a required for IL4-induced gene expression region. Residues 570 to 582 (AAPAPASGPSSSG) are compositionally biased toward low complexity. Phosphotyrosine is present on residues tyrosine 583 and tyrosine 610. Positions 623–635 (CPGTSGLEPSSGE) are enriched in polar residues. Tyrosine 638 bears the Phosphotyrosine mark. Composition is skewed to pro residues over residues 646–655 (PGCPETPVPT) and 665–676 (EPPPSPQNPPFP). Positions 716–721 (IVYSAL) match the ITIM motif motif. The disordered stretch occupies residues 811-830 (SQTPTAVAMLSPGPACMDTS).

The protein belongs to the type I cytokine receptor family. Type 4 subfamily. The functional IL4 receptor is formed by initial binding of IL4 to IL4R. Subsequent recruitment to the complex of the common gamma chain, in immune cells, creates a type I receptor and, in non-immune cells, of IL13RA1 forms a type II receptor. IL4R can also interact with the IL13/IL13RA1 complex to form a similar type II receptor. Interacts with PIK3C3. Interacts with the SH2-containing phosphatases, PTPN6/SHIP1, PTPN11/SHIP2 and INPP5D/SHIP. Interacts with JAK1 through a Box 1-containing region; inhibited by SOCS5. Interacts with SOCS5; inhibits IL4 signaling. Interacts with JAK3. Interacts with CLM1. Interacts with IL13RA2. In terms of processing, on IL4 binding, phosphorylated on C-terminal tyrosine residues.

The protein localises to the membrane. Its function is as follows. Receptor for both interleukin 4 and interleukin 13. Couples to the JAK1/2/3-STAT6 pathway. The IL4 response is involved in promoting Th2 differentiation. The IL4/IL13 responses are involved in regulating IgE production and, chemokine and mucus production at sites of allergic inflammation. In certain cell types, can signal through activation of insulin receptor substrates, IRS1/IRS2. The protein is Interleukin-4 receptor subunit alpha (IL4R) of Sus scrofa (Pig).